A 72-amino-acid polypeptide reads, in one-letter code: Sperm protein associated with the nucleus on the X chromosome N1 (72 aa).

The interval 1–40 is disordered; the sequence is MEKPTSSTNGEKRKSPCDSNNKNDEMQETPNRDLVLEPSL. Basic and acidic residues predominate over residues 10–35; sequence GEKRKSPCDSNNKNDEMQETPNRDLV.

The protein belongs to the SPAN-X family.

The polypeptide is Sperm protein associated with the nucleus on the X chromosome N1 (SPANXN1) (Gorilla gorilla gorilla (Western lowland gorilla)).